A 331-amino-acid polypeptide reads, in one-letter code: MQEDSKVYDITVIGGGPVGLFTAFYGGMRQASVKIIESLPQLGGQLSALYPEKYIYDVAGFPKIRAQELVNNLKEQMAKFDQTICLEQAVESVEKQADGVFKLVTNSETHYSKTVIITAGNGAFKPRKLELESAEQYEGKNLHYFIDDLNQFAGRRVAVLGGGDSAVDWALMLEPIAKEVSIIHRRDKFRAHEHSVENLHNSKVNVLTPFVPAELVGEDRIEQLVLEEVKGDRKEIIEIDDLIVNYGFVSSLGPIKNWGLDIEKNSIVVKSTMETNIEGFFAAGDICTYEGKVKLIASGFGEAPTAVNNAKAYMDPKARVQPLHSTSMFEK.

Positions 37, 45, 50, 90, 124, 285, and 326 each coordinate FAD.

Belongs to the ferredoxin--NADP reductase type 2 family. As to quaternary structure, homodimer. It depends on FAD as a cofactor.

It catalyses the reaction 2 reduced [2Fe-2S]-[ferredoxin] + NADP(+) + H(+) = 2 oxidized [2Fe-2S]-[ferredoxin] + NADPH. The polypeptide is Ferredoxin--NADP reductase 2 (Bacillus velezensis (strain DSM 23117 / BGSC 10A6 / LMG 26770 / FZB42) (Bacillus amyloliquefaciens subsp. plantarum)).